The primary structure comprises 188 residues: Adenine phosphoribosyltransferase (188 aa).

Position 134-138 (A134–S138) interacts with AMP.

Belongs to the purine/pyrimidine phosphoribosyltransferase family. Homodimer. It depends on Mg(2+) as a cofactor.

The protein localises to the cytoplasm. Its subcellular location is the nucleus. The enzyme catalyses AMP + diphosphate = 5-phospho-alpha-D-ribose 1-diphosphate + adenine. Its pathway is purine metabolism; AMP biosynthesis via salvage pathway; AMP from adenine: step 1/1. In terms of biological role, catalyzes a salvage reaction resulting in the formation of AMP, that is energically less costly than de novo synthesis. This is Adenine phosphoribosyltransferase (APT1) from Candida albicans (strain SC5314 / ATCC MYA-2876) (Yeast).